Consider the following 95-residue polypeptide: YcgL domain-containing protein Sden_1630 (95 aa).

A YcgL domain is found at 1–85 (MICTVYKSRR…PKANLLEEHK (85 aa)).

The chain is YcgL domain-containing protein Sden_1630 from Shewanella denitrificans (strain OS217 / ATCC BAA-1090 / DSM 15013).